Consider the following 163-residue polypeptide: MTREIKVGIGDYAVGKGEGIISTYGLGSCVGITLYDRVTKVGGLLHALLPEAARYGHRGNPAKYVDTGLQLLLKEVLKLGASKFRLEAKLFGGAQMFQNIKSDELKIGERNVQTAKRELKKLGIRLVAEDTGGRGGRTIYLDLSTGKVRMRKVIGGQVIEKVY.

This sequence belongs to the CheD family.

It catalyses the reaction L-glutaminyl-[protein] + H2O = L-glutamyl-[protein] + NH4(+). In terms of biological role, probably deamidates glutamine residues to glutamate on methyl-accepting chemotaxis receptors (MCPs), playing an important role in chemotaxis. The protein is Probable chemoreceptor glutamine deamidase CheD of Pyrococcus abyssi (strain GE5 / Orsay).